Reading from the N-terminus, the 537-residue chain is Tyrosine-protein kinase Fyn (537 aa).

The N-myristoyl glycine moiety is linked to residue glycine 2. 2 S-palmitoyl cysteine lipidation sites follow: cysteine 3 and cysteine 6. Position 12 is a phosphothreonine; by PKC (threonine 12). Residues 14–35 (LTEERDGSLNQSSGYRYGTDPT) form a disordered region. Phosphoserine occurs at positions 21 and 26. The SH3 domain maps to 82-143 (TGVTLFVALY…PSNYVAPVDS (62 aa)). The 98-residue stretch at 149-246 (WYFGKLGRKD…GLCCRLVVPC (98 aa)) folds into the SH2 domain. Tyrosine 185 carries the post-translational modification Phosphotyrosine. A Protein kinase domain is found at 271-524 (LQLIKRLGNG…YLQSFLEDYF (254 aa)). Residues 277-285 (LGNGQFGEV) and lysine 299 contribute to the ATP site. Aspartate 390 serves as the catalytic Proton acceptor. Tyrosine 420 bears the Phosphotyrosine; by autocatalysis mark. Position 531 is a phosphotyrosine; by CSK (tyrosine 531).

This sequence belongs to the protein kinase superfamily. Tyr protein kinase family. SRC subfamily. In terms of assembly, interacts (via its SH3 domain) with PIK3R1 and PRMT8. Interacts with FYB1, PAG1, and SH2D1A. Interacts with CD79A (tyrosine-phosphorylated form); the interaction increases FYN activity. Interacts (via SH2 domain) with CSF1R (tyrosine phosphorylated). Interacts with TOM1L1 (phosphorylated form). Interacts with KDR (tyrosine phosphorylated). Interacts (via SH3 domain) with KLHL2 (via N-terminus). Interacts with SH2D1A and SLAMF1. Interacts with ITCH; the interaction phosphorylates ITCH and negatively regulates its activity. Interacts with FASLG. Interacts with RUNX3. Interacts with KIT. Interacts with EPHA8; possible downstream effector of EPHA8 in regulation of cell adhesion. Interacts with PTK2/FAK1; this interaction leads to PTK2/FAK1 phosphorylation and activation. Interacts with CAV1; this interaction couples integrins to the Ras-ERK pathway. Interacts with UNC119. Interacts (via SH2 domain) with PTPRH (phosphorylated form). Interacts with PTPRO (phosphorylated form). Interacts with PTPRB (phosphorylated form). Interacts with FYB2. Interacts with DSCAM. Interacts with SKAP1 and FYB1; this interaction promotes the phosphorylation of CLNK. Interacts with NEDD9; in the presence of PTK2. (Microbial infection) Interacts (via its SH3 domain) with hepatitis E virus/HEV protein ORF3. The cofactor is Mn(2+). Autophosphorylated at Tyr-420. Phosphorylation on the C-terminal tail at Tyr-531 by CSK maintains the enzyme in an inactive state. PTPRC/CD45 dephosphorylates Tyr-531 leading to activation. Ultraviolet B (UVB) strongly increase phosphorylation at Thr-12 and kinase activity, and promotes translocation from the cytoplasm to the nucleus. Dephosphorylation at Tyr-420 by PTPN2 negatively regulates T-cell receptor signaling. Phosphorylated at tyrosine residues, which can be enhanced by NTN1. In terms of processing, palmitoylated. Palmitoylation at Cys-3 and Cys-6, probably by ZDHHC21, regulates subcellular location. As to expression, isoform 1 is highly expressed in the brain. Isoform 2 is expressed in cells of hemopoietic lineages, especially T-lymphocytes.

It localises to the cytoplasm. It is found in the nucleus. The protein resides in the cell membrane. Its subcellular location is the perikaryon. The catalysed reaction is L-tyrosyl-[protein] + ATP = O-phospho-L-tyrosyl-[protein] + ADP + H(+). Inhibited by phosphorylation of Tyr-531 by leukocyte common antigen and activated by dephosphorylation of this site. Functionally, non-receptor tyrosine-protein kinase that plays a role in many biological processes including regulation of cell growth and survival, cell adhesion, integrin-mediated signaling, cytoskeletal remodeling, cell motility, immune response and axon guidance. Inactive FYN is phosphorylated on its C-terminal tail within the catalytic domain. Following activation by PKA, the protein subsequently associates with PTK2/FAK1, allowing PTK2/FAK1 phosphorylation, activation and targeting to focal adhesions. Involved in the regulation of cell adhesion and motility through phosphorylation of CTNNB1 (beta-catenin) and CTNND1 (delta-catenin). Regulates cytoskeletal remodeling by phosphorylating several proteins including the actin regulator WAS and the microtubule-associated proteins MAP2 and MAPT. Promotes cell survival by phosphorylating AGAP2/PIKE-A and preventing its apoptotic cleavage. Participates in signal transduction pathways that regulate the integrity of the glomerular slit diaphragm (an essential part of the glomerular filter of the kidney) by phosphorylating several slit diaphragm components including NPHS1, KIRREL1 and TRPC6. Plays a role in neural processes by phosphorylating DPYSL2, a multifunctional adapter protein within the central nervous system, ARHGAP32, a regulator for Rho family GTPases implicated in various neural functions, and SNCA, a small pre-synaptic protein. Involved in reelin signaling by mediating phosphorylation of DAB1 following reelin (RELN)-binding to its receptor. Participates in the downstream signaling pathways that lead to T-cell differentiation and proliferation following T-cell receptor (TCR) stimulation. Phosphorylates PTK2B/PYK2 in response to T-cell receptor activation. Also participates in negative feedback regulation of TCR signaling through phosphorylation of PAG1, thereby promoting interaction between PAG1 and CSK and recruitment of CSK to lipid rafts. CSK maintains LCK and FYN in an inactive form. Promotes CD28-induced phosphorylation of VAV1. In mast cells, phosphorylates CLNK after activation of immunoglobulin epsilon receptor signaling. Can also promote CD244-mediated NK cell activation. In Homo sapiens (Human), this protein is Tyrosine-protein kinase Fyn (FYN).